The sequence spans 64 residues: Large ribosomal subunit protein uL30 (64 aa).

The protein belongs to the universal ribosomal protein uL30 family. In terms of assembly, part of the 50S ribosomal subunit.

In Desulforudis audaxviator (strain MP104C), this protein is Large ribosomal subunit protein uL30.